The sequence spans 118 residues: DNA-directed RNA polymerase subunit omega (118 aa).

The tract at residues 78–104 (DEPEEDSMAMLMGGGQPDKPAEDDMSE) is disordered.

The protein belongs to the RNA polymerase subunit omega family. The RNAP catalytic core consists of 2 alpha, 1 beta, 1 beta' and 1 omega subunit. When a sigma factor is associated with the core the holoenzyme is formed, which can initiate transcription.

It carries out the reaction RNA(n) + a ribonucleoside 5'-triphosphate = RNA(n+1) + diphosphate. In terms of biological role, promotes RNA polymerase assembly. Latches the N- and C-terminal regions of the beta' subunit thereby facilitating its interaction with the beta and alpha subunits. The polypeptide is DNA-directed RNA polymerase subunit omega (Dinoroseobacter shibae (strain DSM 16493 / NCIMB 14021 / DFL 12)).